The chain runs to 293 residues: Pyridoxal 5'-phosphate synthase subunit PdxS (293 aa).

Residue D23 participates in D-ribose 5-phosphate binding. Catalysis depends on K80, which acts as the Schiff-base intermediate with D-ribose 5-phosphate. A D-ribose 5-phosphate-binding site is contributed by G152. R164 serves as a coordination point for D-glyceraldehyde 3-phosphate. D-ribose 5-phosphate contacts are provided by residues G213 and 234–235 (GS).

The protein belongs to the PdxS/SNZ family. In the presence of PdxT, forms a dodecamer of heterodimers.

It carries out the reaction aldehydo-D-ribose 5-phosphate + D-glyceraldehyde 3-phosphate + L-glutamine = pyridoxal 5'-phosphate + L-glutamate + phosphate + 3 H2O + H(+). Its pathway is cofactor biosynthesis; pyridoxal 5'-phosphate biosynthesis. Catalyzes the formation of pyridoxal 5'-phosphate from ribose 5-phosphate (RBP), glyceraldehyde 3-phosphate (G3P) and ammonia. The ammonia is provided by the PdxT subunit. Can also use ribulose 5-phosphate and dihydroxyacetone phosphate as substrates, resulting from enzyme-catalyzed isomerization of RBP and G3P, respectively. In Niallia circulans (Bacillus circulans), this protein is Pyridoxal 5'-phosphate synthase subunit PdxS.